A 225-amino-acid chain; its full sequence is Transmembrane emp24 domain-containing protein p24delta11 (225 aa).

Residues 1-35 form the signal peptide; that stretch reads MDLLPSRYKIHKTKLRWILTMMTMMMMMVMRRGES. Over 36–193 the chain is Lumenal; the sequence is MRLDMESGNT…ELNRSTNSRM (158 aa). The region spanning 45 to 160 is the GOLD domain; the sequence is TKCISDDIKT…ITMLEVEVRK (116 aa). A coiled-coil region spans residues 175 to 188; sequence LIEREREMQELNRS. Position 178 is an omega-N-methylated arginine (Arg-178). Residue Asn-186 is glycosylated (N-linked (GlcNAc...) asparagine). A helical transmembrane segment spans residues 194 to 210; it reads AALSLLSFVVTMSVAGL. Residues 211–225 are Cytoplasmic-facing; it reads QLRHLKSFLERKKLL. A COPII vesicle coat-binding motif is present at residues 218 to 219; it reads FL. The COPI vesicle coat-binding signature appears at 218-225; sequence FLERKKLL.

Belongs to the EMP24/GP25L family. In terms of assembly, probably oligomerizes with other members of the EMP24/GP25L family. Associates with the COPI vesicle coat (coatomer). Associates with the COPII vesicle coat (coatomer).

The protein localises to the endoplasmic reticulum membrane. It localises to the golgi apparatus. The protein resides in the cis-Golgi network membrane. It is found in the golgi stack membrane. In terms of biological role, involved in vesicular protein trafficking. Mainly functions in the early secretory pathway. Thought to act as cargo receptor at the lumenal side for incorporation of secretory cargo molecules into transport vesicles and to be involved in vesicle coat formation at the cytoplasmic side. This is Transmembrane emp24 domain-containing protein p24delta11 from Arabidopsis thaliana (Mouse-ear cress).